The sequence spans 155 residues: Large ribosomal subunit protein uL15 (155 aa).

The disordered stretch occupies residues methionine 1–lysine 63. 2 stretches are compositionally biased toward gly residues: residues arginine 21–serine 31 and serine 42–glycine 52.

This sequence belongs to the universal ribosomal protein uL15 family. Part of the 50S ribosomal subunit.

Its function is as follows. Binds to the 23S rRNA. This is Large ribosomal subunit protein uL15 from Symbiobacterium thermophilum (strain DSM 24528 / JCM 14929 / IAM 14863 / T).